The following is a 421-amino-acid chain: ATP-dependent RNA helicase RhlB (421 aa).

The short motif at 9–37 (QKFSDFSLHPKVVEALEKKGFHNCTPIQA) is the Q motif element. The Helicase ATP-binding domain occupies 40–219 (LPLTLAGRDV…FEQMNNAEYI (180 aa)). 53 to 60 (AQTGTGKT) is an ATP binding site. Positions 165–168 (DEAD) match the DEAD box motif. Positions 245–390 (RLLQTLIEEE…VSKYNPDALM (146 aa)) constitute a Helicase C-terminal domain. A disordered region spans residues 392-421 (DLPKPLRLTRPRTGNGPRRTGAPRNRRRSG). Residues 402 to 414 (PRTGNGPRRTGAP) show a composition bias toward low complexity.

This sequence belongs to the DEAD box helicase family. RhlB subfamily. Component of the RNA degradosome, which is a multiprotein complex involved in RNA processing and mRNA degradation.

It localises to the cytoplasm. The enzyme catalyses ATP + H2O = ADP + phosphate + H(+). DEAD-box RNA helicase involved in RNA degradation. Has RNA-dependent ATPase activity and unwinds double-stranded RNA. The polypeptide is ATP-dependent RNA helicase RhlB (Shigella dysenteriae serotype 1 (strain Sd197)).